Reading from the N-terminus, the 339-residue chain is Putative adenosine/adenine deaminase (339 aa).

The Zn(2+) site is built by His-16, His-18, and His-200. His-18 provides a ligand contact to substrate. The active-site Proton donor is the Glu-203. Position 281 (Asp-281) interacts with Zn(2+). A substrate-binding site is contributed by Asp-282.

This sequence belongs to the metallo-dependent hydrolases superfamily. Adenosine and AMP deaminases family. It depends on Zn(2+) as a cofactor.

In terms of biological role, putative nucleoside deaminase. May catalyze the hydrolytic deamination of adenosine or some similar substrate and play a role in purine metabolism. This chain is Putative adenosine/adenine deaminase, found in Streptomyces virginiae (Streptomyces cinnamonensis).